A 205-amino-acid polypeptide reads, in one-letter code: dTTP/UTP pyrophosphatase (205 aa).

The active-site Proton acceptor is the Asp71.

It belongs to the Maf family. YhdE subfamily. The cofactor is a divalent metal cation.

The protein localises to the cytoplasm. The enzyme catalyses dTTP + H2O = dTMP + diphosphate + H(+). The catalysed reaction is UTP + H2O = UMP + diphosphate + H(+). Functionally, nucleoside triphosphate pyrophosphatase that hydrolyzes dTTP and UTP. May have a dual role in cell division arrest and in preventing the incorporation of modified nucleotides into cellular nucleic acids. This chain is dTTP/UTP pyrophosphatase, found in Syntrophus aciditrophicus (strain SB).